The following is a 162-amino-acid chain: Ribonuclease H (162 aa).

Positions 1 to 141 constitute an RNase H type-1 domain; the sequence is MKRIEIFTDG…ADALARAGMA (141 aa). Mg(2+) contacts are provided by Asp-9, Glu-47, Asp-69, and Asp-133. The tract at residues 139-162 is disordered; that stretch reads GMAPFKKKKGGDTASSEEGSARRR.

This sequence belongs to the RNase H family. In terms of assembly, monomer. It depends on Mg(2+) as a cofactor.

The protein localises to the cytoplasm. The catalysed reaction is Endonucleolytic cleavage to 5'-phosphomonoester.. Endonuclease that specifically degrades the RNA of RNA-DNA hybrids. The polypeptide is Ribonuclease H (Chelativorans sp. (strain BNC1)).